Here is a 142-residue protein sequence, read N- to C-terminus: Large ribosomal subunit protein uL13 (142 aa).

This sequence belongs to the universal ribosomal protein uL13 family. Part of the 50S ribosomal subunit.

Functionally, this protein is one of the early assembly proteins of the 50S ribosomal subunit, although it is not seen to bind rRNA by itself. It is important during the early stages of 50S assembly. The chain is Large ribosomal subunit protein uL13 from Shewanella putrefaciens (strain CN-32 / ATCC BAA-453).